The primary structure comprises 351 residues: Beta-hexosaminidase (351 aa).

Residues D62, R70, R133, and 163–164 each bind substrate; that span reads KH. H176 (proton donor/acceptor) is an active-site residue. Catalysis depends on D248, which acts as the Nucleophile.

This sequence belongs to the glycosyl hydrolase 3 family. NagZ subfamily. Monomer.

The protein localises to the cytoplasm. It carries out the reaction Hydrolysis of terminal non-reducing N-acetyl-D-hexosamine residues in N-acetyl-beta-D-hexosaminides.. Its pathway is cell wall biogenesis; peptidoglycan recycling. Functionally, plays a role in peptidoglycan recycling by cleaving the terminal beta-1,4-linked N-acetylglucosamine (GlcNAc) from peptide-linked peptidoglycan fragments, giving rise to free GlcNAc, anhydro-N-acetylmuramic acid and anhydro-N-acetylmuramic acid-linked peptides. The polypeptide is Beta-hexosaminidase (Haemophilus influenzae (strain ATCC 51907 / DSM 11121 / KW20 / Rd)).